A 209-amino-acid chain; its full sequence is Large ribosomal subunit protein uL3 (209 aa).

Residues 127–166 (NFGGGQRTHGQSDRLRAPGSIGGASDPSKTFKGTKMGGRM) form a disordered region.

This sequence belongs to the universal ribosomal protein uL3 family. Part of the 50S ribosomal subunit. Forms a cluster with proteins L14 and L19.

One of the primary rRNA binding proteins, it binds directly near the 3'-end of the 23S rRNA, where it nucleates assembly of the 50S subunit. The sequence is that of Large ribosomal subunit protein uL3 from Chlorobium phaeovibrioides (strain DSM 265 / 1930) (Prosthecochloris vibrioformis (strain DSM 265)).